Reading from the N-terminus, the 98-residue chain is NADH-ubiquinone oxidoreductase chain 4L (98 aa).

3 helical membrane-spanning segments follow: residues 2-22 (LSIS…MLMF), 29-49 (SLLC…LIIL), and 61-81 (ILLL…LVMV).

It belongs to the complex I subunit 4L family. Core subunit of respiratory chain NADH dehydrogenase (Complex I) which is composed of 45 different subunits.

It is found in the mitochondrion inner membrane. The enzyme catalyses a ubiquinone + NADH + 5 H(+)(in) = a ubiquinol + NAD(+) + 4 H(+)(out). In terms of biological role, core subunit of the mitochondrial membrane respiratory chain NADH dehydrogenase (Complex I) which catalyzes electron transfer from NADH through the respiratory chain, using ubiquinone as an electron acceptor. Part of the enzyme membrane arm which is embedded in the lipid bilayer and involved in proton translocation. This is NADH-ubiquinone oxidoreductase chain 4L (MT-ND4L) from Microcebus ravelobensis (Golden-brown mouse lemur).